Reading from the N-terminus, the 529-residue chain is Bifunctional purine biosynthesis protein PurH (529 aa).

Residues 2 to 149 (TNLVPVGRAL…KNHRFVNVVT (148 aa)) enclose the MGS-like domain.

This sequence belongs to the PurH family.

It catalyses the reaction (6R)-10-formyltetrahydrofolate + 5-amino-1-(5-phospho-beta-D-ribosyl)imidazole-4-carboxamide = 5-formamido-1-(5-phospho-D-ribosyl)imidazole-4-carboxamide + (6S)-5,6,7,8-tetrahydrofolate. It carries out the reaction IMP + H2O = 5-formamido-1-(5-phospho-D-ribosyl)imidazole-4-carboxamide. It functions in the pathway purine metabolism; IMP biosynthesis via de novo pathway; 5-formamido-1-(5-phospho-D-ribosyl)imidazole-4-carboxamide from 5-amino-1-(5-phospho-D-ribosyl)imidazole-4-carboxamide (10-formyl THF route): step 1/1. The protein operates within purine metabolism; IMP biosynthesis via de novo pathway; IMP from 5-formamido-1-(5-phospho-D-ribosyl)imidazole-4-carboxamide: step 1/1. The polypeptide is Bifunctional purine biosynthesis protein PurH (Cereibacter sphaeroides (strain ATCC 17025 / ATH 2.4.3) (Rhodobacter sphaeroides)).